The following is a 35-amino-acid chain: Photosystem II reaction center protein T (35 aa).

Residues 3–23 traverse the membrane as a helical segment; that stretch reads ALVYTFLLVSTLGIIFFAIFF.

It belongs to the PsbT family. In terms of assembly, PSII is composed of 1 copy each of membrane proteins PsbA, PsbB, PsbC, PsbD, PsbE, PsbF, PsbH, PsbI, PsbJ, PsbK, PsbL, PsbM, PsbT, PsbY, PsbZ, Psb30/Ycf12, at least 3 peripheral proteins of the oxygen-evolving complex and a large number of cofactors. It forms dimeric complexes.

It localises to the plastid. It is found in the chloroplast thylakoid membrane. Its function is as follows. Found at the monomer-monomer interface of the photosystem II (PS II) dimer, plays a role in assembly and dimerization of PSII. PSII is a light-driven water plastoquinone oxidoreductase, using light energy to abstract electrons from H(2)O, generating a proton gradient subsequently used for ATP formation. In Oenothera argillicola (Appalachian evening primrose), this protein is Photosystem II reaction center protein T.